The sequence spans 2116 residues: Unconventional myosin-VIIb (2116 aa).

Positions Q65–S760 constitute a Myosin motor domain. Residue G158–T165 coordinates ATP. The segment at L637–E659 is actin-binding. 6 IQ domains span residues I745–R765, L763–T792, Q786–R815, E814–Q834, M832–V861, and K855–L884. The residue at position 904 (S904) is a Phosphoserine. The mediates interaction with ANKS4B stretch occupies residues E916–N1542. Residues H989–K1192 form the MyTH4 1 domain. The FERM 1 domain occupies I1197–A1506. At S1371 the chain carries Phosphoserine. One can recognise an SH3 domain in the interval E1501–T1567. The interval E1501–T2116 is mediates interaction with CDHR2, CDHR5 and USH1C. MyTH4 domains lie at Y1644–E1793 and E1790–L1896. S1645 is subject to Phosphoserine. One can recognise an FERM 2 domain in the interval I1799–M2102.

Belongs to the TRAFAC class myosin-kinesin ATPase superfamily. Myosin family. Part of the IMAC/intermicrovillar adhesion complex/intermicrovillar tip-link complex composed of ANKS4B, MYO7B, USH1C, CDHR2 and CDHR5. Interacts with CDHR2. Interacts with CDHR5. Interacts with USH1C. Interacts with ANKS4B; requires initial interaction with USH1C. Interacts with CALML4; the interaction mediates the association of CALML4 with the IMAC/intermicrovillar adhesion complex.

It localises to the cytoplasm. Its subcellular location is the cytoskeleton. It is found in the cell projection. The protein resides in the microvillus. In terms of biological role, myosins are actin-based motor molecules with ATPase activity. Their highly divergent tails are presumed to bind to membranous compartments, which would be moved relative to actin filaments. As part of the intermicrovillar adhesion complex/IMAC plays a role in epithelial brush border differentiation, controlling microvilli organization and length. May link the complex to the actin core bundle of microvilli. The protein is Unconventional myosin-VIIb of Homo sapiens (Human).